We begin with the raw amino-acid sequence, 273 residues long: Small ribosomal subunit protein uS2 (273 aa).

The protein belongs to the universal ribosomal protein uS2 family.

This Mycolicibacterium vanbaalenii (strain DSM 7251 / JCM 13017 / BCRC 16820 / KCTC 9966 / NRRL B-24157 / PYR-1) (Mycobacterium vanbaalenii) protein is Small ribosomal subunit protein uS2.